The chain runs to 817 residues: Sorting nexin-29 (817 aa).

Positions 37-181 (SDSDSRVTCL…ILFAINIDNK (145 aa)) constitute an RUN domain. A phosphoserine mark is found at Ser-269, Ser-292, Ser-293, Ser-331, and Ser-345. The interval 271 to 299 (DDEEDEQSSGDVFKKIPGAGESSEENSDR) is disordered. 2 disordered regions span residues 344 to 381 (KSID…LDAG) and 417 to 460 (APLG…LPSA). Acidic residues predominate over residues 347–358 (DDEDADENEDDV). A compositionally biased stretch (basic and acidic residues) spans 369 to 378 (GHSESPEKPL). Positions 445 to 460 (SPPGQESPLSSLLPSA) are enriched in low complexity. Phosphoserine is present on Ser-451. Residues 466–546 (MTVSDLRQAI…VLKVQLKKYV (81 aa)) are a coiled coil. Ser-641 carries the post-translational modification Phosphoserine. Thr-643 is subject to Phosphothreonine. Phosphoserine occurs at positions 644 and 648. The PX domain occupies 658-781 (ALINVWIPSV…PFFVDITPPG (124 aa)). The disordered stretch occupies residues 784–817 (LTKNSRPKVASRFPKLARGHPRETRNVEPQSGDL).

This sequence belongs to the sorting nexin family.

The chain is Sorting nexin-29 (SNX29) from Bos taurus (Bovine).